Consider the following 910-residue polypeptide: Exonuclease mut-7 (910 aa).

The 202-residue stretch at isoleucine 404–glutamate 605 folds into the 3'-5' exonuclease domain.

It belongs to the mut-7 family. Mg(2+) is required as a cofactor.

Represses the transposition of Tc1, Tc3, Tc4, and Tc5, perhaps by degrading transposon-specific messages. Also affects sperm development, sensitivity to RNAi of mainly germline expressed genes, silencing of some germline transgenes, X chromosome loss, and is required for cosuppression (functional silencing of chromosomal loci induced by transgenes) and for silencing induced by antisense RNA oligomers. In Caenorhabditis elegans, this protein is Exonuclease mut-7 (mut-7).